The primary structure comprises 500 residues: NAD(P)H-quinone oxidoreductase chain 4, chloroplastic (500 aa).

14 helical membrane passes run 4 to 24 (FPWLTIIVVLPIFAGSSIFFL), 37 to 57 (ICICLLELLLTTYTFCYHFQL), 84 to 104 (GLSIGPILLTGFITTLATLAA), 111 to 129 (SRLFHFLMLAMYSGQIGSF), 134 to 154 (LLLFFIMWELELIPVYLLLSM), 167 to 187 (FILYTAGGSIFLLMGIPGMGL), 208 to 228 (ALEILFYFGFLIAYAVKSPII), 242 to 262 (HYSTCMLLAGILLKMGAYGLV), 272 to 292 (AHSIFSPWLMIVGTIQVIYAA), 305 to 325 (IAYSSVSHMAFIIIGIGSITD), 330 to 350 (GAILQIISHGFIGAALFFLAG), 374 to 396 (IFTMFSSFSMASLALPGMSGFVA), 411 to 431 (FFMPKILITFVMAIGMILTPI), and 462 to 482 (LFVSICIFLPVIGIGIYPDFV).

The protein belongs to the complex I subunit 4 family.

The protein localises to the plastid. It is found in the chloroplast thylakoid membrane. The catalysed reaction is a plastoquinone + NADH + (n+1) H(+)(in) = a plastoquinol + NAD(+) + n H(+)(out). The enzyme catalyses a plastoquinone + NADPH + (n+1) H(+)(in) = a plastoquinol + NADP(+) + n H(+)(out). In Chloranthus spicatus (Chulantree), this protein is NAD(P)H-quinone oxidoreductase chain 4, chloroplastic.